Consider the following 209-residue polypeptide: MHRQLRYAVLATALFASTAFAGARQELDTFTRGLKGLDGQFSQRVTDANGRVKENSSGRVALATPRQFRWEYAKPYKQLIVADGKKVWVFDPDLEQVTVRAQGSEEQNSPLVALIDPTRLDKQYDVSEEAAPRDGLQWLSLTPKVDTDASFQMASLGFGKDGLAKMEVVDAVGQRTAISFSGWKRNPAFAADTFRYTPGKGVDVVGDAQ.

Residues 1 to 21 (MHRQLRYAVLATALFASTAFA) form the signal peptide.

Belongs to the LolA family. As to quaternary structure, monomer.

It localises to the periplasm. Participates in the translocation of lipoproteins from the inner membrane to the outer membrane. Only forms a complex with a lipoprotein if the residue after the N-terminal Cys is not an aspartate (The Asp acts as a targeting signal to indicate that the lipoprotein should stay in the inner membrane). This is Outer-membrane lipoprotein carrier protein from Xanthomonas campestris pv. campestris (strain 8004).